Consider the following 146-residue polypeptide: Hemoglobin subunit beta (146 aa).

In terms of domain architecture, Globin spans 2–146; the sequence is HWSAEEKQLI…VAHSLARVYH (145 aa). Heme b is bound by residues histidine 63 and histidine 92.

This sequence belongs to the globin family. As to quaternary structure, heterotetramer of two alpha chains and two beta chains. As to expression, red blood cells.

Its function is as follows. Involved in oxygen transport from the lung to the various peripheral tissues. This chain is Hemoglobin subunit beta (HBB), found in Microcephalophis gracilis (Graceful small-headed sea snake).